The sequence spans 421 residues: Signal recognition particle receptor FtsY (421 aa).

Over residues 1 to 10 (MFSFFRRKKK) the composition is skewed to basic residues. Positions 1–31 (MFSFFRRKKKQETPALEEAQIQETAAKAESE) are disordered. Residues 228 to 235 (GINGAGKT), 309 to 313 (DTAGR), and 373 to 376 (TKLD) each bind GTP.

It belongs to the GTP-binding SRP family. FtsY subfamily. Part of the signal recognition particle protein translocation system, which is composed of SRP and FtsY. SRP is a ribonucleoprotein composed of Ffh and a 4.5S RNA molecule.

It localises to the cell inner membrane. The protein localises to the cytoplasm. The catalysed reaction is GTP + H2O = GDP + phosphate + H(+). Functionally, involved in targeting and insertion of nascent membrane proteins into the cytoplasmic membrane. Acts as a receptor for the complex formed by the signal recognition particle (SRP) and the ribosome-nascent chain (RNC). Interaction with SRP-RNC leads to the transfer of the RNC complex to the Sec translocase for insertion into the membrane, the hydrolysis of GTP by both Ffh and FtsY, and the dissociation of the SRP-FtsY complex into the individual components. The polypeptide is Signal recognition particle receptor FtsY (Neisseria meningitidis serogroup A / serotype 4A (strain DSM 15465 / Z2491)).